Here is a 156-residue protein sequence, read N- to C-terminus: 6,7-dimethyl-8-ribityllumazine synthase (156 aa).

Residues Phe22, 57-59 (AYE), and 81-83 (TVI) each bind 5-amino-6-(D-ribitylamino)uracil. A (2S)-2-hydroxy-3-oxobutyl phosphate-binding site is contributed by 86–87 (GT). Residue His89 is the Proton donor of the active site. Residue Phe114 participates in 5-amino-6-(D-ribitylamino)uracil binding. Residue Arg128 participates in (2S)-2-hydroxy-3-oxobutyl phosphate binding.

It belongs to the DMRL synthase family. As to quaternary structure, forms an icosahedral capsid composed of 60 subunits, arranged as a dodecamer of pentamers.

It catalyses the reaction (2S)-2-hydroxy-3-oxobutyl phosphate + 5-amino-6-(D-ribitylamino)uracil = 6,7-dimethyl-8-(1-D-ribityl)lumazine + phosphate + 2 H2O + H(+). It functions in the pathway cofactor biosynthesis; riboflavin biosynthesis; riboflavin from 2-hydroxy-3-oxobutyl phosphate and 5-amino-6-(D-ribitylamino)uracil: step 1/2. Its function is as follows. Catalyzes the formation of 6,7-dimethyl-8-ribityllumazine by condensation of 5-amino-6-(D-ribitylamino)uracil with 3,4-dihydroxy-2-butanone 4-phosphate. This is the penultimate step in the biosynthesis of riboflavin. The chain is 6,7-dimethyl-8-ribityllumazine synthase from Sodalis glossinidius (strain morsitans).